We begin with the raw amino-acid sequence, 283 residues long: MSLTMKNVEGFVIFLVIFTSTAAVPQLQKALDGREYLIETELKYNWHQAWHECARHDQQLVTIESADKNNAIIDLVKRVVGKSHNLWLGGNDEYSSSRDYGRPFFWSPTGQAFSFAYWSENNPDNYKHQEHCVHIWDTKPLYQWNDNDCNVKMGYICEPNHFRETYDQALKQKCEAIKITNSKISTEFDQLHAKQSLEFDSITQNVAKVNEDWKIEIQKLQNATQIAIQQIMENHEKKIRDLSDNLLKQLQDSNEQLKQSTDHMNASFGEKLKGQQAENNEIC.

An N-terminal signal peptide occupies residues 1 to 23 (MSLTMKNVEGFVIFLVIFTSTAA). In terms of domain architecture, C-type lectin spans 51–159 (HECARHDQQL…NVKMGYICEP (109 aa)). Disulfide bonds link C53–C157 and C132–C149.

Functionally, role in the defense system of the organism against microorganisms. This lectin binds galactose. This chain is Lectin subunit alpha, found in Sarcophaga peregrina (Flesh fly).